A 260-amino-acid chain; its full sequence is MAHLLILDALNLIRRIHSVQSKQHPDDVAAQLAATDITMQRAVNTILQEATPSHVIAVFDSEAPGWRKAKYAAYKEGRTAMPDALRQGLGQLQDSLLRLGIDSLVSETDEADDLIATLVKPLVANDHQVTLISTDKGFCQLLDSGLQIRDYFNKRWLDHAFVQQQYGLQPSQLVDFWALTGISGMNIKGVPGIGEKTAQQLLSEYGTLTQLLDADATDNKKLQLVQQHREVCLLAQELVRLKDDIPLGFNLKDLRYTPPA.

Residue Asp-112 participates in Mg(2+) binding. In terms of domain architecture, 5'-3' exonuclease spans 168-258; the sequence is LQPSQLVDFW…FNLKDLRYTP (91 aa). Residues Leu-179, Val-190, and Ile-193 each coordinate K(+). The interval 192–197 is interaction with DNA; the sequence is GIGEKT.

This sequence belongs to the Xni family. Mg(2+) is required as a cofactor. Requires K(+) as cofactor.

Its function is as follows. Has flap endonuclease activity. During DNA replication, flap endonucleases cleave the 5'-overhanging flap structure that is generated by displacement synthesis when DNA polymerase encounters the 5'-end of a downstream Okazaki fragment. This chain is Flap endonuclease Xni, found in Tolumonas auensis (strain DSM 9187 / NBRC 110442 / TA 4).